The following is a 413-amino-acid chain: Multidrug resistance protein MdtA (413 aa).

Positions 1–20 are cleaved as a signal peptide; that stretch reads MKGSNTFRWAIAIGVVVAAA. 2 disordered regions span residues 31-57 and 391-413; these read SPTAAPGVAAQAPHTAAAGRRGMRDGP and EPQTTMADEKSPSRHEGQKGARA. A compositionally biased stretch (basic and acidic residues) spans 397–413; sequence ADEKSPSRHEGQKGARA.

Belongs to the membrane fusion protein (MFP) (TC 8.A.1) family. As to quaternary structure, part of a tripartite efflux system composed of MdtA, MdtB and MdtC.

The protein localises to the cell inner membrane. The protein is Multidrug resistance protein MdtA of Salmonella paratyphi C (strain RKS4594).